A 356-amino-acid polypeptide reads, in one-letter code: tRNA N6-adenosine threonylcarbamoyltransferase (356 aa).

2 residues coordinate Fe cation: His-115 and His-119. Residues 138–142 (LVSGG), Asp-171, Gly-184, and Asn-283 contribute to the substrate site. Asp-311 contacts Fe cation.

This sequence belongs to the KAE1 / TsaD family. It depends on Fe(2+) as a cofactor.

The protein localises to the cytoplasm. The enzyme catalyses L-threonylcarbamoyladenylate + adenosine(37) in tRNA = N(6)-L-threonylcarbamoyladenosine(37) in tRNA + AMP + H(+). Required for the formation of a threonylcarbamoyl group on adenosine at position 37 (t(6)A37) in tRNAs that read codons beginning with adenine. Is involved in the transfer of the threonylcarbamoyl moiety of threonylcarbamoyl-AMP (TC-AMP) to the N6 group of A37, together with TsaE and TsaB. TsaD likely plays a direct catalytic role in this reaction. The chain is tRNA N6-adenosine threonylcarbamoyltransferase from Prochlorococcus marinus (strain AS9601).